We begin with the raw amino-acid sequence, 132 residues long: MQAMNWLDQVKWDAQGLVPVIAQEKDTGDVMMFAWMNREALAKTAELGRAVYFSRSRNKLWFKGEESGHVQTVHEVRIDCDNDVVLLKITQTGHEPGIACHTGRHSCFYSVLRDGQWQAVDPVLKDPESIYK.

Position 79 (D79) interacts with Mg(2+). C80 serves as a coordination point for Zn(2+). Mg(2+) contacts are provided by D81 and D83. The Zn(2+) site is built by C100 and C107.

It belongs to the PRA-CH family. As to quaternary structure, homodimer. Mg(2+) serves as cofactor. Requires Zn(2+) as cofactor.

The protein resides in the cytoplasm. It carries out the reaction 1-(5-phospho-beta-D-ribosyl)-5'-AMP + H2O = 1-(5-phospho-beta-D-ribosyl)-5-[(5-phospho-beta-D-ribosylamino)methylideneamino]imidazole-4-carboxamide. It participates in amino-acid biosynthesis; L-histidine biosynthesis; L-histidine from 5-phospho-alpha-D-ribose 1-diphosphate: step 3/9. In terms of biological role, catalyzes the hydrolysis of the adenine ring of phosphoribosyl-AMP. In Delftia acidovorans (strain DSM 14801 / SPH-1), this protein is Phosphoribosyl-AMP cyclohydrolase.